A 739-amino-acid polypeptide reads, in one-letter code: Protein kinase C (739 aa).

Residues 1–117 (MFTGKLQIKV…SETAVQDLWV (117 aa)) form the C2 domain. Phorbol-ester/DAG-type zinc fingers lie at residues 176–226 (GHKF…VSKC) and 251–301 (PHRF…ANTC). In terms of domain architecture, Protein kinase spans 408–665 (FNFIKVLGKG…ENEIRKHPFF (258 aa)). ATP-binding positions include 414-422 (LGKGSFGKV) and K437. Catalysis depends on D532, which acts as the Proton acceptor. An AGC-kinase C-terminal domain is found at 666–737 (AKLDWKELEK…VNPKFGPERK (72 aa)).

It belongs to the protein kinase superfamily. AGC Ser/Thr protein kinase family. PKC subfamily.

The enzyme catalyses L-seryl-[protein] + ATP = O-phospho-L-seryl-[protein] + ADP + H(+). It carries out the reaction L-threonyl-[protein] + ATP = O-phospho-L-threonyl-[protein] + ADP + H(+). In terms of biological role, PKC is activated by diacylglycerol which in turn phosphorylates a range of cellular proteins. PKC also serves as the receptor for phorbol esters, a class of tumor promoters. The sequence is that of Protein kinase C (Pkc98E) from Drosophila melanogaster (Fruit fly).